We begin with the raw amino-acid sequence, 223 residues long: Putative PAN domain-containing protein R486 (223 aa).

An N-terminal signal peptide occupies residues 1–23 (MSQTAIIIWIVVIIILLVLGGLG). Positions 39–73 (PTPINPPSSITPIQPINPPSSITPIQPSGPPSGGN) are disordered. Positions 45-64 (PSSITPIQPINPPSSITPIQ) are enriched in low complexity. 2 PAN domains span residues 80–155 (CPAY…EDGC) and 159–223 (ARYN…KMPH). Intrachain disulfides connect cysteine 80/cysteine 155 and cysteine 109/cysteine 131. Asparagine 162, asparagine 189, and asparagine 213 each carry an N-linked (GlcNAc...) asparagine; by host glycan. An intrachain disulfide couples cysteine 182 to cysteine 204.

The protein localises to the secreted. Its subcellular location is the virion. The protein is Putative PAN domain-containing protein R486 of Acanthamoeba polyphaga mimivirus (APMV).